The following is a 469-amino-acid chain: Abscisic acid 8'-hydroxylase CYP707A2 (469 aa).

Residues 3–23 (FVSMLCLFTFISLTLLLIHSI) traverse the membrane as a helical segment. Position 414 (Cys-414) interacts with heme.

This sequence belongs to the cytochrome P450 family. It depends on heme as a cofactor. Expressed at low levels in fruit.

It is found in the membrane. The catalysed reaction is 2-cis-(+)-abscisate + reduced [NADPH--hemoprotein reductase] + O2 = (+)-8'-hydroxyabscisate + oxidized [NADPH--hemoprotein reductase] + H2O + H(+). It functions in the pathway plant hormone degradation; abscisic acid degradation. Its function is as follows. Negative regulator of fruit ripening involved in the oxidative degradation of abscisic acid (ABA). This chain is Abscisic acid 8'-hydroxylase CYP707A2, found in Solanum lycopersicum (Tomato).